Consider the following 497-residue polypeptide: MASLLHKFLENASGKKGQDLASTAYLAALDHLLHSFPSIGKSVIDELKGQRSRLKMIASENYASISVQLAMGNLLTDKYCEGSPFKRFYSCCENVDAIEWECAETAKELFGAESAFVQPHSGADANLLAMMAIITQKIQGPAVKRLGYKTINDLTDKEYAELKAEIGSHVCLGPSLNSGGHLTHGTVRMNVMSKLMRCLPYEVNKKTERFDYAEIARLVRTHKPTVLVAGYSSYSRRLNFSTLKQIADDCGAVLWVDMAHFAGLVAGGVFVEEENPIPFADIVTTTTHKTLRGPRGGLVLASKEYDGIINRACPLMMGGPLPHVIAAKAVALKEALTVDFKKYAHQVVDNARTLAEHFQKQGLRLLTGGTDNHMLIIDLTSLGISGRIAEDILSSIGIAVNRNTIPSDAVGKWDTSGIRLGTPALTTLGMGSDEMEEVANIIVKVLRNITLRRNADDSFSKSEGELPENIAQEARARVADLLSRFPLYPEIDLETLV.

(6S)-5,6,7,8-tetrahydrofolate contacts are provided by residues Leu-176 and Gly-180–Leu-182. N6-(pyridoxal phosphate)lysine is present on Lys-289.

It belongs to the SHMT family. As to quaternary structure, homodimer. It depends on pyridoxal 5'-phosphate as a cofactor.

The protein resides in the cytoplasm. It catalyses the reaction (6R)-5,10-methylene-5,6,7,8-tetrahydrofolate + glycine + H2O = (6S)-5,6,7,8-tetrahydrofolate + L-serine. It participates in one-carbon metabolism; tetrahydrofolate interconversion. It functions in the pathway amino-acid biosynthesis; glycine biosynthesis; glycine from L-serine: step 1/1. In terms of biological role, catalyzes the reversible interconversion of serine and glycine with tetrahydrofolate (THF) serving as the one-carbon carrier. This reaction serves as the major source of one-carbon groups required for the biosynthesis of purines, thymidylate, methionine, and other important biomolecules. Also exhibits THF-independent aldolase activity toward beta-hydroxyamino acids, producing glycine and aldehydes, via a retro-aldol mechanism. This Chlamydia caviae (strain ATCC VR-813 / DSM 19441 / 03DC25 / GPIC) (Chlamydophila caviae) protein is Serine hydroxymethyltransferase.